The sequence spans 268 residues: Zinc transporter ZupT (268 aa).

Helical transmembrane passes span Ile-6–Ile-26, Phe-37–Ile-57, Gly-73–Asp-93, Val-126–Ala-146, Ile-153–Ala-173, Trp-189–Met-209, Phe-211–Ile-231, and Thr-248–Ile-268. Fe(2+) is bound by residues Asn-136 and Glu-139. 2 residues coordinate Zn(2+): Glu-139 and His-164. Positions 165, 168, and 197 each coordinate Fe(2+). Glu-168 contacts Zn(2+).

Belongs to the ZIP transporter (TC 2.A.5) family. ZupT subfamily.

It is found in the cell membrane. It carries out the reaction Zn(2+)(in) = Zn(2+)(out). In terms of biological role, mediates zinc uptake. May also transport other divalent cations. This Corynebacterium efficiens (strain DSM 44549 / YS-314 / AJ 12310 / JCM 11189 / NBRC 100395) protein is Zinc transporter ZupT.